Consider the following 177-residue polypeptide: Large ribosomal subunit protein uL6 (177 aa).

The protein belongs to the universal ribosomal protein uL6 family. As to quaternary structure, part of the 50S ribosomal subunit.

Functionally, this protein binds to the 23S rRNA, and is important in its secondary structure. It is located near the subunit interface in the base of the L7/L12 stalk, and near the tRNA binding site of the peptidyltransferase center. In Nitrosospira multiformis (strain ATCC 25196 / NCIMB 11849 / C 71), this protein is Large ribosomal subunit protein uL6.